We begin with the raw amino-acid sequence, 617 residues long: Chitin elicitor receptor kinase 1 (617 aa).

An N-terminal signal peptide occupies residues 1 to 23; sequence MKLKISLIAPILLLFSFFFAVES. Residues 24 to 232 lie on the Extracellular side of the membrane; the sequence is KCRTSCPLAL…KSSKQDGVGA (209 aa). Intrachain disulfides connect C25/C93, C29/C155, and C91/C153. 3 N-linked (GlcNAc...) asparagine glycosylation sites follow: N40, N52, and N102. The 29-residue stretch at 46-74 folds into the LysM 1; degenerate domain; it reads VINQNLNSSIAPYDQINFDPILRYNSNIK. The 33-residue stretch at 108 to 140 folds into the LysM 2; degenerate domain; it reads RQEDTYERVAISNYANLTTMESLQARNPFPATN. 109-115 contacts chitin; the sequence is QEDTYER. N123 carries an N-linked (GlcNAc...) asparagine glycan. 137–143 serves as a coordination point for chitin; the sequence is PATNIPL. N-linked (GlcNAc...) asparagine glycosylation is present at N152. Residues 168 to 211 form the LysM 3 domain; the sequence is VTYPLRPEDSLSSIARSSGVSADILQRYNPGVNFNSGNGIVYVP. A helical membrane pass occupies residues 233-253; the sequence is GVIAGIVIGVIVALLLILFIV. Residues 254–617 are Cytoplasmic-facing; the sequence is YYAYRKNKSK…EDLVSLMSGR (364 aa). 3 positions are modified to phosphoserine: S266, S268, and S274. The Protein kinase domain occupies 322–594; sequence FNLSFKIGQG…YIVVALSTLF (273 aa). Residues 328 to 336 and K349 contribute to the ATP site; that span reads IGQGGFGAV. Phosphotyrosine is present on Y390. The active-site Proton acceptor is D441. A phosphothreonine mark is found at T479 and T519.

It belongs to the protein kinase superfamily. Ser/Thr protein kinase family. In terms of assembly, forms homodimers and homooligomers. Homodimerization is required to trigger plant defenses. Binds to chitin, chitosan and chito-oligomer oligosaccharide elicitors. Interaction with chitin octamer (NAG(8)) promotes homodimerization while shorter chitin oligomers inhibit homodimerization. Interacts with Pseudomonas syringae hopAB2/avrPtoB. Interacts (preferentially when unphosphorylated) with PBL27 at the plasma membrane. Binds to IOS1. In terms of processing, autophosphorylated. Autophosphorylation is induced by chitin and derivatives. Post-translationally, ubiquitinated and targeted to the proteasome by hopAB2/avrPtoB of Pseudomonas syringae pv. tomato DC3000. In terms of tissue distribution, expressed ubiquitously, with lowest expression in pollen.

The protein localises to the cell membrane. It catalyses the reaction L-seryl-[protein] + ATP = O-phospho-L-seryl-[protein] + ADP + H(+). The enzyme catalyses L-threonyl-[protein] + ATP = O-phospho-L-threonyl-[protein] + ADP + H(+). Activated by chitin-mediated homodimerization. In terms of biological role, lysin motif (LysM) receptor kinase that functions as a cell surface receptor in chitin elicitor (chitooligosaccharides) signaling leading to innate immunity toward both biotic and abiotic stresses (e.g. tolerance to salinity, heavy-metal stresses, and Botrytis cinerea infection). Recognizes microbe-derived N-acetylglucosamine (NAG)-containing ligands. Involved in the resistance to pathogenic fungi Alternaria brassicicola and Erysiphe cichoracearum, probably by sensing microbe-associated molecular patterns (MAMP) and pathogen-associated molecular patterns (PAMP). Plays an essential role in detecting peptidoglycans (e.g. PGNs) and restricting bacterial growth. Target of the bacterial type III effector E3-ligase protein hopAB2/avrPtoB of Pseudomonas syringae pv. tomato DC3000 that mediates ubiquitination and subsequent proteolysis, thus blocking all defense responses by suppressing PAMP-triggered immunity (PTI). Mediates chitin-induced phosphorylation of PBL27. The sequence is that of Chitin elicitor receptor kinase 1 (CERK1) from Arabidopsis thaliana (Mouse-ear cress).